Here is a 316-residue protein sequence, read N- to C-terminus: Na(+)/H(+) exchange regulatory cofactor NHE-RF2 (316 aa).

A PDZ 1 domain is found at 11 to 91 (LCRLVRGEQG…ETRLLVVDKE (81 aa)). A disordered region spans residues 109–148 (QRGLPPAHDPWEPKPDWARAGSLSSDAGQKDVNGPPRELR). Ser130, Ser183, and Ser254 each carry phosphoserine. In terms of domain architecture, PDZ 2 spans 151 to 231 (LCHLRKGPQG…EARLLLVDPE (81 aa)). The segment at 244–303 (TEEHVEGPLPSPITNGTSPAQDASAWKRDPFQESGLHLSPTAAEAKEKARATRVNKRAPQ) is disordered. Residues 255 to 264 (PITNGTSPAQ) are compositionally biased toward polar residues. A Phosphoserine modification is found at Ser282.

As to quaternary structure, homodimer, and heterodimer with NHERF1. Binds ADRB2, SLC9A3, P2RY1, P2YR2, SRY, RDX, PDZK1 and LPAR2. Found in a complex with EZR, PODXL and NHERF2. Interacts (via the PDZ domains) with PODXL (via the C-terminal PDZ-binding motif DTHL); interaction is detected in glomerular epithelium cells. Binds PODXL. Interacts with SGK1 and KCNJ1/ROMK1. Interacts (via the PDZ domains) with SLC26A6. In terms of tissue distribution, detected in kidney glomeruli.

The protein localises to the endomembrane system. It is found in the nucleus. Its subcellular location is the apical cell membrane. Functionally, scaffold protein that connects plasma membrane proteins with members of the ezrin/moesin/radixin family and thereby helps to link them to the actin cytoskeleton and to regulate their surface expression. Necessary for cAMP-mediated phosphorylation and inhibition of SLC9A3. May also act as scaffold protein in the nucleus. The polypeptide is Na(+)/H(+) exchange regulatory cofactor NHE-RF2 (NHERF2) (Oryctolagus cuniculus (Rabbit)).